Reading from the N-terminus, the 213-residue chain is Large ribosomal subunit protein uL1 (213 aa).

It belongs to the universal ribosomal protein uL1 family. As to quaternary structure, part of the 50S ribosomal subunit.

Binds directly to 23S rRNA. Probably involved in E site tRNA release. In terms of biological role, protein L1 is also a translational repressor protein, it controls the translation of its operon by binding to its mRNA. The sequence is that of Large ribosomal subunit protein uL1 from Methanocorpusculum labreanum (strain ATCC 43576 / DSM 4855 / Z).